Consider the following 327-residue polypeptide: Undecaprenyl-phosphate 4-deoxy-4-formamido-L-arabinose transferase (327 aa).

At 1-235 the chain is on the cytoplasmic side; that stretch reads MFDAAPIKKV…TCLTTTPLRL (235 aa). The chain crosses the membrane as a helical span at residues 236-256; that stretch reads LSLLGSVIAIGGFSLSVLLIV. Over 257 to 269 the chain is Periplasmic; it reads LRLALGPQWAAEG. A helical transmembrane segment spans residues 270 to 290; that stretch reads VFMLFAVLFTFIGAQFIGMGL. Residues 291–327 are Cytoplasmic-facing; that stretch reads LGEYIGRIYNDVRARPRYFVQQVIYPESTPFTEESHQ.

The protein belongs to the glycosyltransferase 2 family.

Its subcellular location is the cell inner membrane. It carries out the reaction UDP-4-deoxy-4-formamido-beta-L-arabinose + di-trans,octa-cis-undecaprenyl phosphate = 4-deoxy-4-formamido-alpha-L-arabinopyranosyl di-trans,octa-cis-undecaprenyl phosphate + UDP. It functions in the pathway glycolipid biosynthesis; 4-amino-4-deoxy-alpha-L-arabinose undecaprenyl phosphate biosynthesis; 4-amino-4-deoxy-alpha-L-arabinose undecaprenyl phosphate from UDP-4-deoxy-4-formamido-beta-L-arabinose and undecaprenyl phosphate: step 1/2. Its pathway is bacterial outer membrane biogenesis; lipopolysaccharide biosynthesis. Its function is as follows. Catalyzes the transfer of 4-deoxy-4-formamido-L-arabinose from UDP to undecaprenyl phosphate. The modified arabinose is attached to lipid A and is required for resistance to polymyxin and cationic antimicrobial peptides. The sequence is that of Undecaprenyl-phosphate 4-deoxy-4-formamido-L-arabinose transferase from Salmonella agona (strain SL483).